The sequence spans 537 residues: Apolipoprotein N-acyltransferase (537 aa).

6 consecutive transmembrane segments (helical) span residues 10–30, 37–57, 76–96, 107–127, 181–201, and 210–230; these read IALA…ITAG, LAPF…VWLI, YWFG…AFFV, FAVL…FALA, IGLW…ATLI, and AWRA…FGAI. In terms of domain architecture, CN hydrolase spans 248-501; the sequence is MQPNLQQDAK…EGILDASLPA (254 aa). E295 serves as the catalytic Proton acceptor. The active site involves K360. The active-site Nucleophile is the C413. Residues 507–527 traverse the membrane as a helical segment; it reads IYARVGDVPAAVLVALAVLLA.

The protein belongs to the CN hydrolase family. Apolipoprotein N-acyltransferase subfamily.

It localises to the cell inner membrane. It catalyses the reaction N-terminal S-1,2-diacyl-sn-glyceryl-L-cysteinyl-[lipoprotein] + a glycerophospholipid = N-acyl-S-1,2-diacyl-sn-glyceryl-L-cysteinyl-[lipoprotein] + a 2-acyl-sn-glycero-3-phospholipid + H(+). Its pathway is protein modification; lipoprotein biosynthesis (N-acyl transfer). Its function is as follows. Catalyzes the phospholipid dependent N-acylation of the N-terminal cysteine of apolipoprotein, the last step in lipoprotein maturation. This Bradyrhizobium diazoefficiens (strain JCM 10833 / BCRC 13528 / IAM 13628 / NBRC 14792 / USDA 110) protein is Apolipoprotein N-acyltransferase.